The primary structure comprises 158 residues: MAESINSLEELGTVAKTEAAAPVHVQKLDAQGRAYATGKRKDAVARVWVKPGTGKITVNDKEFEKYFARPVLQMILQQPIVASNRAGQFDIVATVAGGGLSGQAGAVRHGISKALTDYEPGLRTVLKKGGFLTRDSRVVERKKYGKAKARRSFQFSKR.

The protein belongs to the universal ribosomal protein uS9 family.

The polypeptide is Small ribosomal subunit protein uS9 (Brucella abortus (strain S19)).